The primary structure comprises 242 residues: Uroporphyrinogen-III C-methyltransferase (242 aa).

S-adenosyl-L-homocysteine-binding positions include P12, 88-90 (GGD), 118-119 (TS), and M170.

This sequence belongs to the precorrin methyltransferase family. Homodimer.

The enzyme catalyses uroporphyrinogen III + 2 S-adenosyl-L-methionine = precorrin-2 + 2 S-adenosyl-L-homocysteine + H(+). It participates in cofactor biosynthesis; adenosylcobalamin biosynthesis; precorrin-2 from uroporphyrinogen III: step 1/1. Catalyzes the two successive C-2 and C-7 methylation reactions involved in the conversion of uroporphyrinogen III to precorrin-2 via the intermediate formation of precorrin-1. It is a step in the biosynthesis of both cobalamin (vitamin B12) and coenzyme F430. This chain is Uroporphyrinogen-III C-methyltransferase (cobA), found in Methanocaldococcus jannaschii (strain ATCC 43067 / DSM 2661 / JAL-1 / JCM 10045 / NBRC 100440) (Methanococcus jannaschii).